A 624-amino-acid polypeptide reads, in one-letter code: Probable potassium transport system protein Kup 2 (624 aa).

12 helical membrane-spanning segments follow: residues 14 to 34 (LSFA…LYAF), 51 to 71 (ILSL…LVIV), 97 to 117 (GGWL…DGML), 133 to 153 (LSPN…FFLF), 163 to 183 (IGVY…ILGF), 211 to 231 (SALF…ALFA), 245 to 265 (WFAV…AFVL), 283 to 303 (FLPV…QAII), 335 to 355 (VYLP…VVIF), 364 to 384 (AYGI…GIIA), 393 to 413 (FKIL…AGNI), and 416 to 436 (LLTG…VMYT).

Belongs to the HAK/KUP transporter (TC 2.A.72) family.

The protein resides in the cell inner membrane. It catalyses the reaction K(+)(in) + H(+)(in) = K(+)(out) + H(+)(out). Its function is as follows. Transport of potassium into the cell. Likely operates as a K(+):H(+) symporter. The chain is Probable potassium transport system protein Kup 2 from Legionella pneumophila (strain Lens).